We begin with the raw amino-acid sequence, 313 residues long: Porphobilinogen deaminase (313 aa).

Cys241 carries the S-(dipyrrolylmethanemethyl)cysteine modification.

This sequence belongs to the HMBS family. In terms of assembly, monomer. It depends on dipyrromethane as a cofactor.

It catalyses the reaction 4 porphobilinogen + H2O = hydroxymethylbilane + 4 NH4(+). The protein operates within porphyrin-containing compound metabolism; protoporphyrin-IX biosynthesis; coproporphyrinogen-III from 5-aminolevulinate: step 2/4. It functions in the pathway porphyrin-containing compound metabolism; chlorophyll biosynthesis. In terms of biological role, tetrapolymerization of the monopyrrole PBG into the hydroxymethylbilane pre-uroporphyrinogen in several discrete steps. In Chlorobium phaeovibrioides (strain DSM 265 / 1930) (Prosthecochloris vibrioformis (strain DSM 265)), this protein is Porphobilinogen deaminase.